Reading from the N-terminus, the 542-residue chain is Mitochondrial distribution and morphology protein 34 (542 aa).

Residues 1–216 (MSFRFNKGAF…LPSVIFSMSQ (216 aa)) form the SMP-LTD domain. 2 disordered regions span residues 27 to 58 (LNSKTQSSSQTAPANTTNSAATDEVKQETRGP) and 372 to 435 (SSGD…TTAV). The span at 31 to 48 (TQSSSQTAPANTTNSAAT) shows a compositional bias: low complexity. The segment covering 49–58 (DEVKQETRGP) has biased composition (basic and acidic residues). Residues 379 to 394 (IRRRKIKMGKKSKSKK) are compositionally biased toward basic residues. Residues 403–414 (SSPTVVMPSSPS) are compositionally biased toward low complexity.

This sequence belongs to the MDM34 family. Component of the ER-mitochondria encounter structure (ERMES) or MDM complex, composed of MMM1, MDM10, MDM12 and MDM34.

The protein localises to the mitochondrion outer membrane. Its function is as follows. Component of the ERMES/MDM complex, which serves as a molecular tether to connect the endoplasmic reticulum (ER) and mitochondria. Components of this complex are involved in the control of mitochondrial shape and protein biogenesis, and function in nonvesicular lipid trafficking between the ER and mitochondria. MDM34 is required for the interaction of the ER-resident membrane protein MMM1 and the outer mitochondrial membrane-resident beta-barrel protein MDM10. The sequence is that of Mitochondrial distribution and morphology protein 34 from Lachancea thermotolerans (strain ATCC 56472 / CBS 6340 / NRRL Y-8284) (Yeast).